We begin with the raw amino-acid sequence, 356 residues long: S-adenosylmethionine:tRNA ribosyltransferase-isomerase (356 aa).

It belongs to the QueA family. In terms of assembly, monomer.

It is found in the cytoplasm. The enzyme catalyses 7-aminomethyl-7-carbaguanosine(34) in tRNA + S-adenosyl-L-methionine = epoxyqueuosine(34) in tRNA + adenine + L-methionine + 2 H(+). It functions in the pathway tRNA modification; tRNA-queuosine biosynthesis. Its function is as follows. Transfers and isomerizes the ribose moiety from AdoMet to the 7-aminomethyl group of 7-deazaguanine (preQ1-tRNA) to give epoxyqueuosine (oQ-tRNA). This is S-adenosylmethionine:tRNA ribosyltransferase-isomerase from Ralstonia nicotianae (strain ATCC BAA-1114 / GMI1000) (Ralstonia solanacearum).